The sequence spans 173 residues: Shikimate kinase 1 (173 aa).

Glycine 14 to threonine 19 contributes to the ATP binding site. Residue serine 18 coordinates Mg(2+). Positions 36, 60, and 82 each coordinate substrate. Arginine 120 is an ATP binding site. A substrate-binding site is contributed by arginine 140. An ATP-binding site is contributed by glutamine 157.

The protein belongs to the shikimate kinase family. In terms of assembly, monomer. Requires Mg(2+) as cofactor.

It is found in the cytoplasm. It carries out the reaction shikimate + ATP = 3-phosphoshikimate + ADP + H(+). The protein operates within metabolic intermediate biosynthesis; chorismate biosynthesis; chorismate from D-erythrose 4-phosphate and phosphoenolpyruvate: step 5/7. Catalyzes the specific phosphorylation of the 3-hydroxyl group of shikimic acid using ATP as a cosubstrate. The sequence is that of Shikimate kinase 1 from Escherichia fergusonii (strain ATCC 35469 / DSM 13698 / CCUG 18766 / IAM 14443 / JCM 21226 / LMG 7866 / NBRC 102419 / NCTC 12128 / CDC 0568-73).